The primary structure comprises 327 residues: DNA-directed RNA polymerase subunit alpha (327 aa).

The segment at 1-242 (MRKFLKYQLD…AHLEPIVNID (242 aa)) is alpha N-terminal domain (alpha-NTD). Positions 259–327 (KRQNASISID…TERSLELKKD (69 aa)) are alpha C-terminal domain (alpha-CTD).

The protein belongs to the RNA polymerase alpha chain family. In terms of assembly, homodimer. The RNAP catalytic core consists of 2 alpha, 1 beta, 1 beta' and 1 omega subunit. When a sigma factor is associated with the core the holoenzyme is formed, which can initiate transcription.

The enzyme catalyses RNA(n) + a ribonucleoside 5'-triphosphate = RNA(n+1) + diphosphate. Its function is as follows. DNA-dependent RNA polymerase catalyzes the transcription of DNA into RNA using the four ribonucleoside triphosphates as substrates. This Ureaplasma parvum serovar 3 (strain ATCC 700970) protein is DNA-directed RNA polymerase subunit alpha.